Here is a 272-residue protein sequence, read N- to C-terminus: Ribosomal RNA small subunit methyltransferase A (272 aa).

His13, Leu15, Gly40, Glu61, Asp85, and Asn105 together coordinate S-adenosyl-L-methionine.

It belongs to the class I-like SAM-binding methyltransferase superfamily. rRNA adenine N(6)-methyltransferase family. RsmA subfamily.

The protein resides in the cytoplasm. It catalyses the reaction adenosine(1518)/adenosine(1519) in 16S rRNA + 4 S-adenosyl-L-methionine = N(6)-dimethyladenosine(1518)/N(6)-dimethyladenosine(1519) in 16S rRNA + 4 S-adenosyl-L-homocysteine + 4 H(+). Functionally, specifically dimethylates two adjacent adenosines (A1518 and A1519) in the loop of a conserved hairpin near the 3'-end of 16S rRNA in the 30S particle. May play a critical role in biogenesis of 30S subunits. This chain is Ribosomal RNA small subunit methyltransferase A, found in Bacteroides fragilis (strain ATCC 25285 / DSM 2151 / CCUG 4856 / JCM 11019 / LMG 10263 / NCTC 9343 / Onslow / VPI 2553 / EN-2).